Reading from the N-terminus, the 33-residue chain is NAD-reducing hydrogenase HoxS subunit gamma (33 aa).

A 2Fe-2S ferredoxin-type domain is found at 1–33 (SIEIEIDGVTVTTEESRTLVDVAAEAGVYIPTL).

Belongs to the complex I 75 kDa subunit family. As to quaternary structure, tetramer of an alpha and a gamma subunits (flavin-containing dimer), and a delta and a nickel-containing beta subunits (hydrogenase dimer). [4Fe-4S] cluster serves as cofactor.

The protein localises to the cytoplasm. The catalysed reaction is H2 + NAD(+) = NADH + H(+). Functionally, subunits alpha and gamma of HoxS constitute an NADH--oxidoreductase. This chain is NAD-reducing hydrogenase HoxS subunit gamma (hoxU), found in Rhodococcus opacus (Nocardia opaca).